A 160-amino-acid polypeptide reads, in one-letter code: Aspartate carbamoyltransferase regulatory chain (160 aa).

The Zn(2+) site is built by Cys110, Cys115, Cys140, and Cys143.

The protein belongs to the PyrI family. In terms of assembly, contains catalytic and regulatory chains. Zn(2+) is required as a cofactor.

Its function is as follows. Involved in allosteric regulation of aspartate carbamoyltransferase. This Hyperthermus butylicus (strain DSM 5456 / JCM 9403 / PLM1-5) protein is Aspartate carbamoyltransferase regulatory chain.